The following is a 267-amino-acid chain: Tryptophan synthase alpha chain (267 aa).

Residues Glu43 and Asp54 each act as proton acceptor in the active site.

This sequence belongs to the TrpA family. In terms of assembly, tetramer of two alpha and two beta chains.

The enzyme catalyses (1S,2R)-1-C-(indol-3-yl)glycerol 3-phosphate + L-serine = D-glyceraldehyde 3-phosphate + L-tryptophan + H2O. The protein operates within amino-acid biosynthesis; L-tryptophan biosynthesis; L-tryptophan from chorismate: step 5/5. Its function is as follows. The alpha subunit is responsible for the aldol cleavage of indoleglycerol phosphate to indole and glyceraldehyde 3-phosphate. The protein is Tryptophan synthase alpha chain of Bacillus licheniformis (strain ATCC 14580 / DSM 13 / JCM 2505 / CCUG 7422 / NBRC 12200 / NCIMB 9375 / NCTC 10341 / NRRL NRS-1264 / Gibson 46).